A 495-amino-acid chain; its full sequence is 3-octaprenyl-4-hydroxybenzoate carboxy-lyase (495 aa).

Asparagine 172 contributes to the Mn(2+) binding site. Prenylated FMN-binding positions include isoleucine 175 to arginine 177, arginine 189 to leucine 191, and arginine 194 to glycine 195. Residue glutamate 238 coordinates Mn(2+). Residue aspartate 287 is the Proton donor of the active site.

It belongs to the UbiD family. In terms of assembly, homohexamer. Prenylated FMN is required as a cofactor. The cofactor is Mn(2+).

The protein resides in the cell membrane. The enzyme catalyses a 4-hydroxy-3-(all-trans-polyprenyl)benzoate + H(+) = a 2-(all-trans-polyprenyl)phenol + CO2. It participates in cofactor biosynthesis; ubiquinone biosynthesis. In terms of biological role, catalyzes the decarboxylation of 3-octaprenyl-4-hydroxy benzoate to 2-octaprenylphenol, an intermediate step in ubiquinone biosynthesis. This is 3-octaprenyl-4-hydroxybenzoate carboxy-lyase from Yersinia pestis bv. Antiqua (strain Angola).